The primary structure comprises 575 residues: MSNGQLIYLMVAIAVILVLAYVVAIFLRKRNEGRLEALEEKKEELYNLPVNDEVEAVKNMHLIGQSQVAFREWNQKWVDLSLNSFADIENNLFEAEGYNHSFRFLKASHQIDQIESQITLIEEDIAAIRNALADLEKQESKNSGRVLHALDLFEELQHRVAENSEQYGQALDEIEKQLENIQSEFSQFVTLNSSGDPVEAAVILDNTENHILALSHIVDRVPALVTTLSTELPDQLQDLEAGYRKLIDANYHFVETDIEARFHLLYEAFKKNQENIRQLELDNAEYENGQAQEEINALYDIFTREIAAQKVVENLLATLPTYLQHMKENNTLLGEDIARLNKTYLLPETAASHVRRIQTELESFEAAIVEVTSNQEEPTQAYSVLEENLEDLQTQLKDIEDEQISVSERLTQIEKDDINARQKANVYVNRLHTIKRYMEKRNLPGIPQTFLKLFFTASNNTEDLMVELEQKMINIESVTRVLEIATNDMEALETETYNIVQYATLTEQLLQYSNRYRSFDERIQEAFNEALDIFEKEFDYHASFDKISQALEVAEPGVTNRFVTSYEKTRETIRF.

Residues 1-8 are Extracellular-facing; it reads MSNGQLIY. A helical membrane pass occupies residues 9–27; it reads LMVAIAVILVLAYVVAIFL. The Cytoplasmic portion of the chain corresponds to 28-575; that stretch reads RKRNEGRLEA…YEKTRETIRF (548 aa). 4 coiled-coil regions span residues 105-191, 265-301, 354-416, and 456-526; these read LKAS…FVTL, LYEAFKKNQENIRQLELDNAEYENGQAQEEINALYDI, VRRI…IEKD, and TASN…IQEA.

The protein belongs to the EzrA family.

Its subcellular location is the cell membrane. In terms of biological role, negative regulator of FtsZ ring formation; modulates the frequency and position of FtsZ ring formation. Inhibits FtsZ ring formation at polar sites. Interacts either with FtsZ or with one of its binding partners to promote depolymerization. The protein is Septation ring formation regulator EzrA of Streptococcus pneumoniae serotype 4 (strain ATCC BAA-334 / TIGR4).